The following is a 306-amino-acid chain: Protein YIPF1 (306 aa).

The Cytoplasmic portion of the chain corresponds to 1 to 119 (MAAVDDLQFE…VRLYIRSNPD (119 aa)). The tract at residues 14–62 (NAATSLTANPDATTVNIEDPGETPKHQPGSPRGSGREEDDELLGNDDSD) is disordered. Positions 15 to 29 (AATSLTANPDATTVN) are enriched in polar residues. The segment covering 50–59 (EEDDELLGND) has biased composition (acidic residues). Residues 120–140 (LYGPFWICATLVFAIAISGNL) traverse the membrane as a helical segment. The Lumenal segment spans residues 141 to 162 (SNFLIHLGEKTYHYVPEFRKVS). The helical transmembrane segment at 163-183 (IAATIIYAYAWLVPLALWGFL) threads the bilayer. Residues 184–200 (MWRNSKVMNIVSYSFLE) are Cytoplasmic-facing. Residues 201-221 (IVCVYGYSLFIYIPTAILWII) traverse the membrane as a helical segment. The Lumenal portion of the chain corresponds to 222–227 (PQKAVR). The chain crosses the membrane as a helical span at residues 228–248 (WILVMIALGISGSLLAMTFWP). Over 249 to 256 (AVREDNRR) the chain is Cytoplasmic. The helical transmembrane segment at 257–277 (VALATIVTIVLLHMLLSVGCL) threads the bilayer. At 278 to 306 (AYFFDAPEMDHLPTTTATPNQTVAAAKSS) the chain is on the lumenal side. N-linked (GlcNAc...) asparagine glycosylation is present at Asn297.

It belongs to the YIP1 family. Interacts with YIPF6; this interaction may stabilize YIPF1. May also form a ternary complex with YIPF2 and YIPF6.

Its subcellular location is the golgi apparatus. It is found in the cis-Golgi network membrane. The protein resides in the trans-Golgi network membrane. It localises to the late endosome membrane. This Homo sapiens (Human) protein is Protein YIPF1 (YIPF1).